A 213-amino-acid polypeptide reads, in one-letter code: Redox-sensing transcriptional repressor Rex (213 aa).

Residues 17-56 (LYYRIFKRFYADQVEKASSKQIADAMGIDSATVRRDFSYF) constitute a DNA-binding region (H-T-H motif). 91-96 (GCGNIG) lines the NAD(+) pocket.

This sequence belongs to the transcriptional regulatory Rex family. Homodimer.

It is found in the cytoplasm. Functionally, modulates transcription in response to changes in cellular NADH/NAD(+) redox state. The chain is Redox-sensing transcriptional repressor Rex from Streptococcus uberis (strain ATCC BAA-854 / 0140J).